Reading from the N-terminus, the 860-residue chain is Nuclear cap-binding protein complex subunit 1 (860 aa).

Residues Cys36 to Asp271 enclose the MIF4G domain.

This sequence belongs to the NCBP1 family. In terms of assembly, component of the nuclear cap-binding complex (CBC).

It localises to the nucleus. Its function is as follows. Component of the cap-binding complex (CBC) involved in the nuclear export of capped U snRNAs. The CBC complex is required for efficient pre-mRNA splicing through efficient commitment complex and spliceosome formation; and involved in rRNA processing at sites A0, A1 and A2. This is Nuclear cap-binding protein complex subunit 1 (CBC1) from Eremothecium gossypii (strain ATCC 10895 / CBS 109.51 / FGSC 9923 / NRRL Y-1056) (Yeast).